A 364-amino-acid chain; its full sequence is tRNA N6-adenosine threonylcarbamoyltransferase (364 aa).

Positions 118 and 122 each coordinate Fe cation. Residues 140–144 (LVSGG), aspartate 173, glycine 186, and asparagine 288 contribute to the substrate site. A Fe cation-binding site is contributed by aspartate 316.

It belongs to the KAE1 / TsaD family. Fe(2+) is required as a cofactor.

It localises to the cytoplasm. The enzyme catalyses L-threonylcarbamoyladenylate + adenosine(37) in tRNA = N(6)-L-threonylcarbamoyladenosine(37) in tRNA + AMP + H(+). Functionally, required for the formation of a threonylcarbamoyl group on adenosine at position 37 (t(6)A37) in tRNAs that read codons beginning with adenine. Is involved in the transfer of the threonylcarbamoyl moiety of threonylcarbamoyl-AMP (TC-AMP) to the N6 group of A37, together with TsaE and TsaB. TsaD likely plays a direct catalytic role in this reaction. In Cereibacter sphaeroides (strain KD131 / KCTC 12085) (Rhodobacter sphaeroides), this protein is tRNA N6-adenosine threonylcarbamoyltransferase.